The following is a 291-amino-acid chain: Ribosomal large subunit pseudouridine synthase B (291 aa).

Residues 3-75 (EKLQKVLARA…ICRVLAYYKP (73 aa)) form the S4 RNA-binding domain. Catalysis depends on aspartate 110, which acts as the Nucleophile. Residues 256 to 291 (VEKDRRRMKANQIRRAVKRHSQVSGGRRSGGRNNNG) are disordered.

Belongs to the pseudouridine synthase RsuA family.

It carries out the reaction uridine(2605) in 23S rRNA = pseudouridine(2605) in 23S rRNA. Functionally, responsible for synthesis of pseudouridine from uracil-2605 in 23S ribosomal RNA. This is Ribosomal large subunit pseudouridine synthase B (rluB) from Escherichia coli (strain K12).